A 399-amino-acid polypeptide reads, in one-letter code: MKTYQVNKEGYYGEFGGAYIPEILHRCVEELQNAYSKVLESEGFKQEFHQLLRDYVGRPSPLYLANRLSKKYGCKIYLKREDLNHTGAHKINNAIGQVLLAKRMGKKRIIAETGAGQHGVATATVCALMNMQCIVYMGKTDVERQHINVEKMKMLGAEVRPVTSGNMTLKDATNEAIRDWCCHPADTYYVIGSTVGPHPYPDMVARLQSVISEEIKKQLKEQEGREYPDYLMACVGGGSNAAGTIYHYIDDERVQIVLAEAGGKGIDTGFSAATIQLGKMGIIHGAKTLVIQNEDGQIEEPYSISAGLDYPGIGPMHANLAKQQRALVLAINDDEAIRAAFELTRLEGIIPALESAHALGALDKMRFKPTDIVVLTVSGRGDKDIETYLKESGTRTSLQ.

N6-(pyridoxal phosphate)lysine is present on Lys-90.

It belongs to the TrpB family. As to quaternary structure, tetramer of two alpha and two beta chains. Requires pyridoxal 5'-phosphate as cofactor.

It catalyses the reaction (1S,2R)-1-C-(indol-3-yl)glycerol 3-phosphate + L-serine = D-glyceraldehyde 3-phosphate + L-tryptophan + H2O. It functions in the pathway amino-acid biosynthesis; L-tryptophan biosynthesis; L-tryptophan from chorismate: step 5/5. The beta subunit is responsible for the synthesis of L-tryptophan from indole and L-serine. The chain is Tryptophan synthase beta chain from Phocaeicola vulgatus (strain ATCC 8482 / DSM 1447 / JCM 5826 / CCUG 4940 / NBRC 14291 / NCTC 11154) (Bacteroides vulgatus).